Consider the following 346-residue polypeptide: Glycerol-1-phosphate dehydrogenase [NAD(P)+] (346 aa).

Residues 93 to 97 (GSIID) and 115 to 118 (TTAS) contribute to the NAD(+) site. Asp-120 contributes to the substrate binding site. Ser-124 contributes to the NAD(+) binding site. Asp-167 contributes to the substrate binding site. Zn(2+) is bound by residues Asp-167 and His-247. His-251 serves as a coordination point for substrate. A Zn(2+)-binding site is contributed by His-263.

Belongs to the glycerol-1-phosphate dehydrogenase family. It depends on Zn(2+) as a cofactor.

It localises to the cytoplasm. It carries out the reaction sn-glycerol 1-phosphate + NAD(+) = dihydroxyacetone phosphate + NADH + H(+). It catalyses the reaction sn-glycerol 1-phosphate + NADP(+) = dihydroxyacetone phosphate + NADPH + H(+). Its pathway is membrane lipid metabolism; glycerophospholipid metabolism. In terms of biological role, catalyzes the NAD(P)H-dependent reduction of dihydroxyacetonephosphate (DHAP or glycerone phosphate) to glycerol 1-phosphate (G1P). The G1P thus generated is used as the glycerophosphate backbone of phospholipids in the cellular membranes of Archaea. In Pyrococcus horikoshii (strain ATCC 700860 / DSM 12428 / JCM 9974 / NBRC 100139 / OT-3), this protein is Glycerol-1-phosphate dehydrogenase [NAD(P)+].